The sequence spans 380 residues: Tetratricopeptide repeat protein 19, mitochondrial (380 aa).

Residues 1-70 (MFRLLSWSLG…AALAWFSRPA (70 aa)) constitute a mitochondrion transit peptide. 5 TPR repeats span residues 136-169 (TYTYDLMANLAFIRGQLENAEQLFKATMSYLLGG), 179-212 (IEISLKLASIYAAQNRQEFAVAGYEFCISTLEEK), 237-270 (GMCLDACARYLLFSKQPSQAQRMYEKALQISEEI), 279-312 (IVLMSDLATTLDAQGRFDEAYIYMQRASDLARQI), and 318-351 (HMVLSNLAAVLMHRERYTQAKEIYQEALKQAKLK).

Belongs to the TTC19 family. As to quaternary structure, binds to the mature mitochondrial complex III dimer, after the incorporation of the Rieske protein UQCRFS1. Interacts with UQCRC1 and UQCRFS1. Interacts with ZFYVE26 and CHMP4B. In terms of processing, proteolytically cleaved by PARL.

The protein localises to the mitochondrion inner membrane. Functionally, required for the preservation of the structural and functional integrity of mitochondrial respiratory complex III by allowing the physiological turnover of the Rieske protein UQCRFS1. Involved in the clearance of UQCRFS1 N-terminal fragments, which are produced upon incorporation of UQCRFS1 into the complex III and whose presence is detrimental for its catalytic activity. The protein is Tetratricopeptide repeat protein 19, mitochondrial (TTC19) of Homo sapiens (Human).